The sequence spans 384 residues: Large ribosomal subunit protein uL3m (384 aa).

2 disordered regions span residues 80 to 101 and 237 to 262; these read NQVT…KRRE and QEAS…SGSR. Residues 240-249 are compositionally biased toward polar residues; it reads SHGNSLNHRT.

It belongs to the universal ribosomal protein uL3 family. In terms of assembly, component of the mitochondrial large ribosomal subunit (mt-LSU). Mature N.crassa 74S mitochondrial ribosomes consist of a small (37S) and a large (54S) subunit. The 37S small subunit contains a 16S ribosomal RNA (16S mt-rRNA) and 32 different proteins. The 54S large subunit contains a 23S rRNA (23S mt-rRNA) and 42 different proteins.

It is found in the mitochondrion. Its function is as follows. Component of the mitochondrial ribosome (mitoribosome), a dedicated translation machinery responsible for the synthesis of mitochondrial genome-encoded proteins, including at least some of the essential transmembrane subunits of the mitochondrial respiratory chain. The mitoribosomes are attached to the mitochondrial inner membrane and translation products are cotranslationally integrated into the membrane. The chain is Large ribosomal subunit protein uL3m (mrpl9) from Neurospora crassa (strain ATCC 24698 / 74-OR23-1A / CBS 708.71 / DSM 1257 / FGSC 987).